Here is a 72-residue protein sequence, read N- to C-terminus: Translation initiation factor IF-1 (72 aa).

Residues 1 to 72 (MAKEDSIEME…SKGRIVYRAR (72 aa)) form the S1-like domain.

This sequence belongs to the IF-1 family. In terms of assembly, component of the 30S ribosomal translation pre-initiation complex which assembles on the 30S ribosome in the order IF-2 and IF-3, IF-1 and N-formylmethionyl-tRNA(fMet); mRNA recruitment can occur at any time during PIC assembly.

It localises to the cytoplasm. Functionally, one of the essential components for the initiation of protein synthesis. Stabilizes the binding of IF-2 and IF-3 on the 30S subunit to which N-formylmethionyl-tRNA(fMet) subsequently binds. Helps modulate mRNA selection, yielding the 30S pre-initiation complex (PIC). Upon addition of the 50S ribosomal subunit IF-1, IF-2 and IF-3 are released leaving the mature 70S translation initiation complex. This is Translation initiation factor IF-1 from Nitrosococcus oceani (strain ATCC 19707 / BCRC 17464 / JCM 30415 / NCIMB 11848 / C-107).